The chain runs to 1180 residues: RecBCD enzyme subunit RecB (1180 aa).

The UvrD-like helicase ATP-binding domain occupies 2–450 (SDVAETLDPL…YTLDTNWRSA (449 aa)). Residues 2 to 853 (SDVAETLDPL…KGEPQDAAGL (852 aa)) are ATPase, DNA-binding and helicase activity, interacts with RecC. 23–30 (ASAGTGKT) is an ATP binding site. Residues 252–254 (IDR) mediate DNA binding. Residue Trp447 participates in ATP binding. Positions 480–746 (SAGKNQALRF…QIVTIHKSKG (267 aa)) constitute a UvrD-like helicase C-terminal domain. 3 consecutive DNA-binding regions follow at residues 511-512 (VG), 560-561 (SR), and Arg761. The segment at 900 to 1180 (NWRVTSYSGL…MFAGMTLEEA (281 aa)) is nuclease activity, interacts with RecD and RecA. Mg(2+) contacts are provided by His956, Asp1067, Asp1080, and Tyr1081. Residue Asp1080 is the For nuclease activity of the active site.

Belongs to the helicase family. UvrD subfamily. As to quaternary structure, heterotrimer of RecB, RecC and RecD. All subunits contribute to DNA-binding. The C-terminus interacts with RecA. Interacts with YgbT (Cas1). In terms of assembly, (Microbial infection) Lambda virus GamS protein interacts with the enzyme without displacing any of the subunits. Requires Mg(2+) as cofactor.

The enzyme catalyses Exonucleolytic cleavage (in the presence of ATP) in either 5'- to 3'- or 3'- to 5'-direction to yield 5'-phosphooligonucleotides.. The catalysed reaction is Couples ATP hydrolysis with the unwinding of duplex DNA by translocating in the 3'-5' direction.. It carries out the reaction ATP + H2O = ADP + phosphate + H(+). After reacting with DNA bearing a Chi site the holoenzyme is disassembled and loses exonuclease activity, DNA unwinding and Chi-directed DNA cleavage; RecB remains complexed with ssDNA, which may prevent holoenzyme reassembly. High levels of Mg(2+) (13 mM MgCl(2+)) or incubation with DNase allows holoenzyme reassembly, suggesting it is DNA bound to RecB that prevents reassembly. Its activity is regulated as follows. (Microbial infection) RecBCD is inhibited by the lambda virus gam protein (both GamL and GamS isoforms); in vitro a short preincubation prior to adding DNA results in maximal inhibition. In terms of biological role, a helicase/nuclease that prepares dsDNA breaks (DSB) for recombinational DNA repair. Binds to DSBs and unwinds DNA via a rapid (&gt;1 kb/second) and highly processive (&gt;30 kb) ATP-dependent bidirectional helicase. Unwinds dsDNA until it encounters a Chi (crossover hotspot instigator, 5'-GCTGGTGG-3') sequence from the 3' direction. Cuts ssDNA a few nucleotides 3' to Chi site, by nicking one strand or switching the strand degraded (depending on the reaction conditions). The properties and activities of the enzyme are changed at Chi. The Chi-altered holoenzyme produces a long 3'-ssDNA overhang which facilitates RecA-binding to the ssDNA for homologous DNA recombination and repair. Holoenzyme degrades any linearized DNA that is unable to undergo homologous recombination. In the holoenzyme this subunit contributes ATPase, 3'-5' helicase, exonuclease activity and loads RecA onto ssDNA. The RecBC complex requires the RecD subunit for nuclease activity, but can translocate along ssDNA in both directions. The RecBCD complex does not unwind G-quadruplex DNA. Probably interacts with a component of retron Ec48 which moniters RecBCD stability; when RecB is missing or impaired the retron is activated and becomes toxic. The chain is RecBCD enzyme subunit RecB from Escherichia coli (strain K12).